The primary structure comprises 235 residues: Probable transcriptional regulatory protein MPN_478 (235 aa).

This sequence belongs to the TACO1 family.

It is found in the cytoplasm. This Mycoplasma pneumoniae (strain ATCC 29342 / M129 / Subtype 1) (Mycoplasmoides pneumoniae) protein is Probable transcriptional regulatory protein MPN_478.